We begin with the raw amino-acid sequence, 368 residues long: Divinyl chlorophyll a/b light-harvesting protein PcbA (368 aa).

6 consecutive transmembrane segments (helical) span residues 27 to 47 (FIAS…ANTL), 63 to 83 (GFVV…NGVI), 89 to 109 (MLVV…GAML), 203 to 223 (VMGG…WHIF), 243 to 263 (FVLS…AFWA), and 307 to 327 (LSNF…WHGL).

This sequence belongs to the PsbB/PsbC family. IsiA/Pcb subfamily. In terms of assembly, the antenna complex consists of divinyl chlorophylls (a and b) and divinyl chlorophyll a/b binding proteins. Forms complexes with PSII, consisting of a PSII dimer and 4 or 8 PcbA subunits. These complexes are also found under conditions of iron-starvation. Divinyl chlorophyll a is required as a cofactor. Divinyl chlorophyll b serves as cofactor.

It is found in the cellular thylakoid membrane. In terms of biological role, the antenna complex functions as a light receptor, it captures and delivers excitation energy to photosystems II. The Prochlorales pcb genes are not related to higher plant LHCs. This chain is Divinyl chlorophyll a/b light-harvesting protein PcbA (pcbA), found in Prochlorococcus marinus (strain MIT 9313).